The following is a 71-amino-acid chain: Large ribosomal subunit protein bL31 (71 aa).

Cys-16, Cys-18, Cys-37, and Cys-40 together coordinate Zn(2+).

The protein belongs to the bacterial ribosomal protein bL31 family. Type A subfamily. In terms of assembly, part of the 50S ribosomal subunit. Zn(2+) is required as a cofactor.

Functionally, binds the 23S rRNA. In Nitratidesulfovibrio vulgaris (strain ATCC 29579 / DSM 644 / CCUG 34227 / NCIMB 8303 / VKM B-1760 / Hildenborough) (Desulfovibrio vulgaris), this protein is Large ribosomal subunit protein bL31.